The primary structure comprises 191 residues: Adenylate kinase (191 aa).

12–17 (GSGKTT) is an ATP binding site. Residues 34–63 (STGDLLRAESAKKTERGLLIEKFTSQGELV) are NMP. Residues threonine 35, arginine 40, 61–63 (ELV), 88–91 (GYPR), and glutamine 95 contribute to the AMP site. An LID region spans residues 130 to 136 (GRSRGAD). Arginine 131 provides a ligand contact to ATP. Residues arginine 133 and arginine 145 each coordinate AMP. Arginine 173 lines the ATP pocket.

This sequence belongs to the adenylate kinase family. As to quaternary structure, monomer.

The protein localises to the cytoplasm. The catalysed reaction is AMP + ATP = 2 ADP. The protein operates within purine metabolism; AMP biosynthesis via salvage pathway; AMP from ADP: step 1/1. Functionally, catalyzes the reversible transfer of the terminal phosphate group between ATP and AMP. Plays an important role in cellular energy homeostasis and in adenine nucleotide metabolism. The sequence is that of Adenylate kinase from Helicobacter pylori (strain Shi470).